The following is a 125-amino-acid chain: Small ribosomal subunit protein uS12 (125 aa).

Asp89 carries the 3-methylthioaspartic acid modification.

The protein belongs to the universal ribosomal protein uS12 family. Part of the 30S ribosomal subunit. Contacts proteins S8 and S17. May interact with IF1 in the 30S initiation complex.

Its function is as follows. With S4 and S5 plays an important role in translational accuracy. Interacts with and stabilizes bases of the 16S rRNA that are involved in tRNA selection in the A site and with the mRNA backbone. Located at the interface of the 30S and 50S subunits, it traverses the body of the 30S subunit contacting proteins on the other side and probably holding the rRNA structure together. The combined cluster of proteins S8, S12 and S17 appears to hold together the shoulder and platform of the 30S subunit. This Bordetella petrii (strain ATCC BAA-461 / DSM 12804 / CCUG 43448) protein is Small ribosomal subunit protein uS12.